Reading from the N-terminus, the 138-residue chain is Large ribosomal subunit protein uL16c (138 aa).

It belongs to the universal ribosomal protein uL16 family. Part of the 50S ribosomal subunit.

The protein resides in the plastid. It is found in the chloroplast. In Chaetosphaeridium globosum (Charophycean green alga), this protein is Large ribosomal subunit protein uL16c.